We begin with the raw amino-acid sequence, 96 residues long: Transcription and mRNA export factor ENY2 (96 aa).

This sequence belongs to the ENY2 family. Component of the nuclear pore complex (NPC)-associated TREX-2 complex (transcription and export complex 2). Component of the SAGA transcription coactivator-HAT complex. Within the SAGA complex, participates in a subcomplex of SAGA called the DUB module (deubiquitination module).

The protein localises to the nucleus. It localises to the nucleoplasm. In terms of biological role, involved in mRNA export coupled transcription activation by association with both the TREX-2 and the SAGA complexes. The transcription regulatory histone acetylation (HAT) complex SAGA is a multiprotein complex that activates transcription by remodeling chromatin and mediating histone acetylation and deubiquitination. Within the SAGA complex, participates in a subcomplex that specifically deubiquitinates histones. The SAGA complex is recruited to specific gene promoters by activators, where it is required for transcription. The TREX-2 complex functions in docking export-competent ribonucleoprotein particles (mRNPs) to the nuclear entrance of the nuclear pore complex (nuclear basket). TREX-2 participates in mRNA export and accurate chromatin positioning in the nucleus by tethering genes to the nuclear periphery. The protein is Transcription and mRNA export factor ENY2 of Taeniopygia guttata (Zebra finch).